Consider the following 1493-residue polypeptide: Inactive serine/threonine-protein kinase TEX14 (1493 aa).

ANK repeat units follow at residues 27 to 54, 55 to 84, and 88 to 117; these read LHEY…AVNS, LGQT…DPNH, and DGST…DLRL. One can recognise a Protein kinase domain in the interval 198-511; that stretch reads VISAQNIYSF…IMKNDLKDFI (314 aa). ATP-binding positions include 204–212 and Lys266; that span reads IYSFGFGKF. Ser430 is subject to Phosphoserine; by PLK1. The segment covering 559–573 has biased composition (polar residues); that stretch reads GSQFHSPRGHSSPTG. Residues 559 to 615 are disordered; it reads GSQFHSPRGHSSPTGKATPEPPVPDVSPVAQQTHRQDAASPACSVAEEARNPSPDQT. A phosphoserine mark is found at Ser560 and Ser660. 2 disordered regions span residues 782–904 and 940–1081; these read HDSP…RISM and AATG…LTPD. A GPPX3Y motif is present at residues 789–795; it reads GPPASSY. The short motif at 846–854 is the D-box element; sequence KASLERDRN. Polar residues-rich tracts occupy residues 855-904 and 1001-1020; these read QNTS…RISM and CGQT…QRFT. Positions 1026-1037 are enriched in basic and acidic residues; sequence PPREDEQPEHSE. Polar residues predominate over residues 1053 to 1064; that stretch reads YSGQSAQSTCSP. Over residues 1066-1075 the composition is skewed to acidic residues; sequence SSEDTEDMTD. Ser1100 bears the Phosphoserine mark. Positions 1115 to 1167 are disordered; the sequence is RPQASGEEKFQMRKNLGKNSEILTKSQFQPIRSPEGEQDETLKEPPKEVKEKD. Over residues 1131-1144 the composition is skewed to polar residues; sequence GKNSEILTKSQFQP. Over residues 1154 to 1167 the composition is skewed to basic and acidic residues; that stretch reads ETLKEPPKEVKEKD. Phosphoserine is present on Ser1262. 2 disordered regions span residues 1288-1307 and 1341-1466; these read GAGS…ATQR and KGQQ…EEEE. Polar residues predominate over residues 1343 to 1362; the sequence is QQVSSTALDENTASRPGSTE. Residues 1363-1380 are compositionally biased toward basic and acidic residues; sequence NDQRHLEEQETHSNKEDS. The residue at position 1400 (Ser1400) is a Phosphoserine. Residues 1426–1456 are compositionally biased toward basic and acidic residues; that stretch reads PAREASSKDQEVGEKKRKGEESTKPEKRKPE. Phosphoserine is present on Ser1492.

The protein belongs to the protein kinase superfamily. Interacts with KIF23 and RBM44. Interacts with CEP55; inhibiting interaction between CEP55 and PDCD6IP/ALIX and TSG101. Phosphorylated on Thr residues by CDK1 during early phases of mitosis, promoting the interaction with PLK1 and recruitment to kinetochores. Phosphorylated on Ser-430 by PLK1 during late prometaphase promotes the rapid depletion from kinetochores and its subsequent degradation by the APC/C complex.

It is found in the cytoplasm. Its subcellular location is the midbody. It localises to the chromosome. The protein localises to the centromere. The protein resides in the kinetochore. In terms of biological role, required both for the formation of intercellular bridges during meiosis and for kinetochore-microtubule attachment during mitosis. Intercellular bridges are evolutionarily conserved structures that connect differentiating germ cells and are required for spermatogenesis and male fertility. Acts by promoting the conversion of midbodies into intercellular bridges via its interaction with CEP55: interaction with CEP55 inhibits the interaction between CEP55 and PDCD6IP/ALIX and TSG101, blocking cell abscission and leading to transform midbodies into intercellular bridges. Also plays a role during mitosis: recruited to kinetochores by PLK1 during early mitosis and regulates the maturation of the outer kinetochores and microtubule attachment. Has no protein kinase activity in vitro. The polypeptide is Inactive serine/threonine-protein kinase TEX14 (TEX14) (Bos taurus (Bovine)).